Consider the following 185-residue polypeptide: Ribosome-recycling factor (185 aa).

It belongs to the RRF family.

It is found in the cytoplasm. In terms of biological role, responsible for the release of ribosomes from messenger RNA at the termination of protein biosynthesis. May increase the efficiency of translation by recycling ribosomes from one round of translation to another. In Bacillus mycoides (strain KBAB4) (Bacillus weihenstephanensis), this protein is Ribosome-recycling factor.